The sequence spans 271 residues: Small ribosomal subunit protein uS2 (271 aa).

The protein belongs to the universal ribosomal protein uS2 family.

The polypeptide is Small ribosomal subunit protein uS2 (Wolbachia pipientis subsp. Culex pipiens (strain wPip)).